Consider the following 92-residue polypeptide: Translation initiation factor IF-1 (92 aa).

One can recognise an S1-like domain in the interval 1–72 (MAKEELIQFE…EKGRLIFRHK (72 aa)). Positions 69–92 (FRHKDERPGGPPRSGPPRGQFRRR) are disordered.

This sequence belongs to the IF-1 family. Component of the 30S ribosomal translation pre-initiation complex which assembles on the 30S ribosome in the order IF-2 and IF-3, IF-1 and N-formylmethionyl-tRNA(fMet); mRNA recruitment can occur at any time during PIC assembly.

The protein localises to the cytoplasm. In terms of biological role, one of the essential components for the initiation of protein synthesis. Stabilizes the binding of IF-2 and IF-3 on the 30S subunit to which N-formylmethionyl-tRNA(fMet) subsequently binds. Helps modulate mRNA selection, yielding the 30S pre-initiation complex (PIC). Upon addition of the 50S ribosomal subunit IF-1, IF-2 and IF-3 are released leaving the mature 70S translation initiation complex. This is Translation initiation factor IF-1 from Rhodopseudomonas palustris (strain ATCC BAA-98 / CGA009).